A 450-amino-acid chain; its full sequence is UDP-N-acetylmuramoylalanine--D-glutamate ligase (450 aa).

119-125 contributes to the ATP binding site; the sequence is GSNGKTT.

This sequence belongs to the MurCDEF family.

The protein localises to the cytoplasm. The enzyme catalyses UDP-N-acetyl-alpha-D-muramoyl-L-alanine + D-glutamate + ATP = UDP-N-acetyl-alpha-D-muramoyl-L-alanyl-D-glutamate + ADP + phosphate + H(+). It participates in cell wall biogenesis; peptidoglycan biosynthesis. Its function is as follows. Cell wall formation. Catalyzes the addition of glutamate to the nucleotide precursor UDP-N-acetylmuramoyl-L-alanine (UMA). This chain is UDP-N-acetylmuramoylalanine--D-glutamate ligase, found in Bacillus anthracis (strain A0248).